The sequence spans 76 residues: Putative defensin-like protein 184 (76 aa).

An N-terminal signal peptide occupies residues 1 to 21 (MKNSSILFVLIIVVFLISSSG). 4 disulfides stabilise this stretch: Cys-32/Cys-76, Cys-38/Cys-58, Cys-44/Cys-70, and Cys-48/Cys-72.

It belongs to the DEFL family.

Its subcellular location is the secreted. The protein is Putative defensin-like protein 184 (LCR18) of Arabidopsis thaliana (Mouse-ear cress).